Consider the following 602-residue polypeptide: Pentatricopeptide repeat-containing protein At3g04760, chloroplastic (602 aa).

Residues 1–78 (MTPLSSELVG…TDATLPTERR (78 aa)) constitute a chloroplast transit peptide. The span at 42–64 (FSNSNPNNDNGRSFSSSGARNLQ) shows a compositional bias: polar residues. Residues 42 to 85 (FSNSNPNNDNGRSFSSSGARNLQTTTTTDATLPTERRQQHSQSL) form a disordered region. Over residues 65–74 (TTTTTDATLP) the composition is skewed to low complexity. 14 PPR repeats span residues 88–122 (RDTQMLKIFHRSCRSGNYIESLHLLETMVRKGYNP), 123–153 (DVILCTKLIKGFFTLRNIPKAVRVMEILEKF), 157–191 (DVFAYNALINGFCKMNRIDDATRVLDRMRSKDFSP), 192–226 (DTVTYNIMIGSLCSRGKLDLALKVLNQLLSDNCQP), 227–261 (TVITYTILIEATMLEGGVDEALKLMDEMLSRGLKP), 262–296 (DMFTYNTIIRGMCKEGMVDRAFEMVRNLELKGCEP), 297–331 (DVISYNILLRALLNQGKWEEGEKLMTKMFSEKCDP), 332–366 (NVVTYSILITTLCRDGKIEEAMNLLKLMKEKGLTP), 367–401 (DAYSYDPLIAAFCREGRLDVAIEFLETMISDGCLP), 402–436 (DIVNYNTVLATLCKNGKADQALEIFGKLGEVGCSP), 437–471 (NSSSYNTMFSALWSSGDKIRALHMILEMMSNGIDP), 472–506 (DEITYNSMISCLCREGMVDEAFELLVDMRSCEFHP), 507–541 (SVVTYNIVLLGFCKAHRIEDAINVLESMVGNGCRP), and 542–576 (NETTYTVLIEGIGFAGYRAEAMELANDLVRIDAIS).

The protein belongs to the PPR family. P subfamily.

It localises to the plastid. The protein resides in the chloroplast. The chain is Pentatricopeptide repeat-containing protein At3g04760, chloroplastic from Arabidopsis thaliana (Mouse-ear cress).